An 80-amino-acid chain; its full sequence is Large ribosomal subunit protein uL29 (80 aa).

It belongs to the universal ribosomal protein uL29 family.

The protein is Large ribosomal subunit protein uL29 (rpmC) of Mycobacterium leprae (strain TN).